The sequence spans 911 residues: Androgen receptor (911 aa).

The interval 1–549 (MEVQLGLGRV…PIDYYFPPQK (549 aa)) is modulating. The tract at residues 1–578 (MEVQLGLGRV…GSCKVFFKRA (578 aa)) is interaction with ZNF318. Disordered regions lie at residues 35-164 (QNPG…LSLL) and 192-225 (QQQQ…YLGG). Low complexity predominate over residues 44 to 88 (AASAAPPGASLLLQQQQQQQQQQQQQQQQQQQQQQETSPRQQQQQ). S81 is modified (phosphoserine; by CDK9). S93 carries the post-translational modification Phosphoserine. Low complexity predominate over residues 192–214 (QQQQQEAVSEGSSSGRAREASGA). The segment covering 215–225 (PTSSKDNYLGG) has biased composition (polar residues). Y222 carries the post-translational modification Phosphotyrosine; by CSK. S255 carries the phosphoserine modification. The residue at position 266 (Y266) is a Phosphotyrosine; by CSK and TNK2. Phosphotyrosine; by CSK occurs at positions 306, 345, 356, and 361. A Phosphotyrosine; by CSK and TNK2 modification is found at Y362. A Glycyl lysine isopeptide (Lys-Gly) (interchain with G-Cter in SUMO) cross-link involves residue K385. Phosphotyrosine; by CSK is present on Y392. K512 is covalently cross-linked (Glycyl lysine isopeptide (Lys-Gly) (interchain with G-Cter in SUMO)). A phosphotyrosine; by CSK mark is found at Y526 and Y543. Residues 543–910 (YYFPPQKTCL…GKVKPIYFHT (368 aa)) are interaction with LPXN. 2 NR C4-type zinc fingers span residues 551–571 (CLIC…CGSC) and 587–611 (CASR…LRKC). Residues 551–623 (CLICGDEASG…AGMTLGARKL (73 aa)) constitute a DNA-binding region (nuclear receptor). Residues 563 to 653 (YGALTCGSCK…TEETTQKLTV (91 aa)) form an interaction with HIPK3 region. The interval 583 to 910 (QKYLCASRND…GKVKPIYFHT (328 aa)) is interaction with CCAR1. An interaction with KAT7 region spans residues 616 to 910 (MTLGARKLKK…GKVKPIYFHT (295 aa)). At S642 the chain carries Phosphoserine; by STK4/MST1. An NR LBD domain is found at 660 to 891 (ECQPIFLNVL…DFPEMMAEII (232 aa)). Residues N697 and R744 each contribute to the 17beta-hydroxy-5alpha-androstan-3-one site. Residues K837 and K839 each participate in a glycyl lysine isopeptide (Lys-Gly) (interchain with G-Cter in ubiquitin) cross-link. 17beta-hydroxy-5alpha-androstan-3-one is bound at residue T869. Y907 is modified (phosphotyrosine; by CSK).

This sequence belongs to the nuclear hormone receptor family. NR3 subfamily. As to quaternary structure, binds DNA as a homodimer. Part of a ternary complex containing AR, EFCAB6/DJBP and PARK7. Interacts with HIPK3 and NR0B2 in the presence of androgen. The ligand binding domain interacts with KAT7/HBO1 in the presence of dihydrotestosterone. Interacts with EFCAB6/DJBP, PQBP1, RANBP9, RBAK, SPDEF, SRA1, TGFB1I1 and RREB1. Interacts with ZMIZ1/ZIMP10 and ZMIZ2/ZMIP7 which both enhance its transactivation activity. Interacts with SLC30A9 and RAD54L2/ARIP4. Interacts with MACROD1 (via macro domain). Interacts via the ligand-binding domain with LXXLL and FXXLF motifs from NCOA1, NCOA2, NCOA3 and MAGEA11. Interacts (via nuclear receptor DNA binding domain and nuclear receptor ligand binding domain) with NCOA4. The AR N-terminal poly-Gln region binds Ran resulting in enhancement of AR-mediated transactivation. Ran-binding decreases as the poly-Gln length increases. Interacts with HIP1 (via coiled coil domain). Interacts (via ligand-binding domain) with TRIM68. Interacts with TNK2. Interacts with USP26. Interacts with RNF6. Interacts (regulated by RNF6 probably through polyubiquitination) with RNF14; regulates AR transcriptional activity. Interacts with PRMT2 and TRIM24. Interacts with RACK1. Interacts with RANBP10; this interaction enhances dihydrotestosterone-induced AR transcriptional activity. Interacts with PRPF6 in a hormone-independent way; this interaction enhances dihydrotestosterone-induced AR transcriptional activity. Interacts with STK4/MST1. Interacts with ZIPK/DAPK3. Interacts with LPXN. Interacts with MAK. Part of a complex containing AR, MAK and NCOA3. Interacts with CRY1. Interacts with CCAR1 and GATA2. Interacts with ZNF318. Interacts with BUD31. Interacts with ARID4A. Interacts with ARID4B. Interacts (via NR LBD domain) with ZBTB7A; the interaction is direct and androgen-dependent. Interacts with NCOR1. Interacts with NCOR2. Interacts with CRY2 in a ligand-dependent manner. Phosphorylated in prostate cancer cells in response to several growth factors including EGF. Phosphorylation is induced by c-Src kinase (CSK). Tyr-526 is one of the major phosphorylation sites and an increase in phosphorylation and Src kinase activity is associated with prostate cancer progression. Phosphorylation by TNK2 enhances the DNA-binding and transcriptional activity. Phosphorylation at Ser-81 by CDK9 regulates AR promoter selectivity and cell growth. Post-translationally, sumoylated on Lys-385 (major) and Lys-512. Ubiquitinated. Deubiquitinated by USP26. 'Lys-6' and 'Lys-27'-linked polyubiquitination by RNF6 modulates AR transcriptional activity and specificity. In terms of processing, palmitoylated by ZDHHC7 and ZDHHC21. Palmitoylation is required for plasma membrane targeting and for rapid intracellular signaling via ERK and AKT kinases and cAMP generation.

It is found in the nucleus. It localises to the cytoplasm. Functionally, steroid hormone receptors are ligand-activated transcription factors that regulate eukaryotic gene expression and affect cellular proliferation and differentiation in target tissues. Transcription factor activity is modulated by bound coactivator and corepressor proteins like ZBTB7A that recruits NCOR1 and NCOR2 to the androgen response elements/ARE on target genes, negatively regulating androgen receptor signaling and androgen-induced cell proliferation. Transcription activation is also down-regulated by NR0B2. Activated, but not phosphorylated, by HIPK3 and ZIPK/DAPK3. The protein is Androgen receptor (AR) of Pan troglodytes (Chimpanzee).